A 145-amino-acid chain; its full sequence is Snaclec salmorin subunit B (145 aa).

The first 23 residues, 1-23 (MGRFIFVSFGLLVVFVSLSGTGA), serve as a signal peptide directing secretion. 3 cysteine pairs are disulfide-bonded: Cys25–Cys36, Cys53–Cys141, and Cys118–Cys133. In terms of domain architecture, C-type lectin spans 32 to 142 (YEGHCYKLFN…CRMEAYFVCE (111 aa)). Residues Ser64 and Glu70 each coordinate Ca(2+). Glu142 contacts Ca(2+).

It belongs to the snaclec family. As to quaternary structure, heterodimer of subunits A and B; disulfide-linked. Expressed by the venom gland.

It localises to the secreted. Its function is as follows. Inhibits thrombin-induced fibrinogen clotting and factor Xa-induced prothrombin activation. Binds to thrombin and prothrombin exosites. The chain is Snaclec salmorin subunit B from Gloydius brevicauda (Korean slamosa snake).